The chain runs to 165 residues: Probable chemoreceptor glutamine deamidase CheD (165 aa).

This sequence belongs to the CheD family.

It carries out the reaction L-glutaminyl-[protein] + H2O = L-glutamyl-[protein] + NH4(+). Functionally, probably deamidates glutamine residues to glutamate on methyl-accepting chemotaxis receptors (MCPs), playing an important role in chemotaxis. The chain is Probable chemoreceptor glutamine deamidase CheD from Symbiobacterium thermophilum (strain DSM 24528 / JCM 14929 / IAM 14863 / T).